A 363-amino-acid polypeptide reads, in one-letter code: Chorismate synthase (363 aa).

NADP(+) is bound by residues Arg48 and Arg54. FMN is bound by residues 125–127 (RSS), 237–238 (NA), Gly277, 292–296 (KPTSS), and Arg318.

It belongs to the chorismate synthase family. In terms of assembly, homotetramer. FMNH2 serves as cofactor.

The catalysed reaction is 5-O-(1-carboxyvinyl)-3-phosphoshikimate = chorismate + phosphate. It functions in the pathway metabolic intermediate biosynthesis; chorismate biosynthesis; chorismate from D-erythrose 4-phosphate and phosphoenolpyruvate: step 7/7. In terms of biological role, catalyzes the anti-1,4-elimination of the C-3 phosphate and the C-6 proR hydrogen from 5-enolpyruvylshikimate-3-phosphate (EPSP) to yield chorismate, which is the branch point compound that serves as the starting substrate for the three terminal pathways of aromatic amino acid biosynthesis. This reaction introduces a second double bond into the aromatic ring system. The protein is Chorismate synthase of Pseudomonas putida (strain W619).